A 154-amino-acid polypeptide reads, in one-letter code: MHCPFCGANDTKVIDSRLVAEGEQVRRRRECLACGERFTTFETAELVLPRLIKQDGSRQPFDEEKLRAGMQRALEKRPVSVERLEAALVHIKHKLRATGEREVKSLVVGELVMTELQKLDEVAYIRFASVYRRFQDLNEFREEIDRLAREPGKE.

Residues 3-34 fold into a zinc finger; sequence CPFCGANDTKVIDSRLVAEGEQVRRRRECLAC. The ATP-cone domain maps to 49-139; the sequence is PRLIKQDGSR…VYRRFQDLNE (91 aa).

This sequence belongs to the NrdR family. It depends on Zn(2+) as a cofactor.

Functionally, negatively regulates transcription of bacterial ribonucleotide reductase nrd genes and operons by binding to NrdR-boxes. The chain is Transcriptional repressor NrdR from Pseudomonas syringae pv. syringae (strain B728a).